A 737-amino-acid chain; its full sequence is Catalase-peroxidase 2 (737 aa).

The interval 1 to 33 (MPEATEHPPIGEAQTEPAQSGCPMVIKPPVEGG) is disordered. Residues 107–235 (WHAAGTYRVQ…LGASHMGLIY (129 aa)) constitute a cross-link (tryptophyl-tyrosyl-methioninium (Trp-Tyr) (with M-261)). His108 functions as the Proton acceptor in the catalytic mechanism. The segment at residues 235-261 (YVNPEGPEGNPDPIAAAIDIRETFGRM) is a cross-link (tryptophyl-tyrosyl-methioninium (Tyr-Met) (with W-107)). His276 is a binding site for heme.

Belongs to the peroxidase family. Peroxidase/catalase subfamily. As to quaternary structure, homodimer or homotetramer. Heme b is required as a cofactor. Formation of the three residue Trp-Tyr-Met cross-link is important for the catalase, but not the peroxidase activity of the enzyme.

The catalysed reaction is H2O2 + AH2 = A + 2 H2O. It carries out the reaction 2 H2O2 = O2 + 2 H2O. In terms of biological role, bifunctional enzyme with both catalase and broad-spectrum peroxidase activity. In Mycolicibacterium vanbaalenii (strain DSM 7251 / JCM 13017 / BCRC 16820 / KCTC 9966 / NRRL B-24157 / PYR-1) (Mycobacterium vanbaalenii), this protein is Catalase-peroxidase 2.